Reading from the N-terminus, the 202-residue chain is Peptidyl-tRNA hydrolase (202 aa).

TRNA is bound at residue Y19. H24 (proton acceptor) is an active-site residue. TRNA is bound by residues Y70, N72, and N118.

This sequence belongs to the PTH family. Monomer.

The protein resides in the cytoplasm. The catalysed reaction is an N-acyl-L-alpha-aminoacyl-tRNA + H2O = an N-acyl-L-amino acid + a tRNA + H(+). In terms of biological role, hydrolyzes ribosome-free peptidyl-tRNAs (with 1 or more amino acids incorporated), which drop off the ribosome during protein synthesis, or as a result of ribosome stalling. Its function is as follows. Catalyzes the release of premature peptidyl moieties from peptidyl-tRNA molecules trapped in stalled 50S ribosomal subunits, and thus maintains levels of free tRNAs and 50S ribosomes. This chain is Peptidyl-tRNA hydrolase, found in Prochlorococcus marinus (strain NATL1A).